A 349-amino-acid polypeptide reads, in one-letter code: Protein RecA (349 aa).

An ATP-binding site is contributed by 65–72 (GPESSGKT).

The protein belongs to the RecA family.

The protein localises to the cytoplasm. Functionally, can catalyze the hydrolysis of ATP in the presence of single-stranded DNA, the ATP-dependent uptake of single-stranded DNA by duplex DNA, and the ATP-dependent hybridization of homologous single-stranded DNAs. It interacts with LexA causing its activation and leading to its autocatalytic cleavage. In Clostridium acetobutylicum (strain ATCC 824 / DSM 792 / JCM 1419 / IAM 19013 / LMG 5710 / NBRC 13948 / NRRL B-527 / VKM B-1787 / 2291 / W), this protein is Protein RecA.